The sequence spans 555 residues: MSKSIEQFPKDLSSPLIQLKSSVEKNSKLHIKELFALEPERFQNYSVKFDQLFFDYSKQRITKNILEQLVALANNKQLTQWINRLFSQDKINCTEQREAMHWALRLPSEYSKFPELTKQVHIQLQRMYTLVEKIHAGQYRGATGEVIQDVVNIGVGGSDLGPHMVTHALADFKVKTAKPLNVHFVSTMDGSQLSDLLHQLRPETTLFIISSKSFGTIDTLSNAQTVRQWLEKALGKHDRVVKSHFIGVSTKAEKMNEWGIAPDNQLLLWDWVGGRYSLWSCIGFPIALTIGIDGFQQLLAGAHAVDEHFQNTSFERNIPVLMALLGIWNNNFLNIQTHAVLPYDGRLKYLAAYLQQLEMESNGKSVQRDGQKVELDTCPIVWGEVGPNAQHAFYQLLHQGTQAVSCDFIAPIQRYNADHFTYVENAEALIEQHHLALSNCLAQSRLLAFGNEALDVKELEKLPIYKQYEGNQPSSTLLLDELNPYNLGMLIALYEHKVFVQSVIWNINPFDQWGVEKGKQIANQLLPILNGAQNDLSTLDASTRGLIKILLGKAE.

Glu-360 (proton donor) is an active-site residue. Catalysis depends on residues His-391 and Lys-519.

The protein belongs to the GPI family.

It localises to the cytoplasm. The enzyme catalyses alpha-D-glucose 6-phosphate = beta-D-fructose 6-phosphate. It participates in carbohydrate biosynthesis; gluconeogenesis. Its pathway is carbohydrate degradation; glycolysis; D-glyceraldehyde 3-phosphate and glycerone phosphate from D-glucose: step 2/4. In terms of biological role, catalyzes the reversible isomerization of glucose-6-phosphate to fructose-6-phosphate. The polypeptide is Glucose-6-phosphate isomerase (Acinetobacter baumannii (strain AB307-0294)).